The primary structure comprises 112 residues: Nitrogenase-stabilizing/protective protein NifW (112 aa).

This sequence belongs to the NifW family. In terms of assembly, homotrimer; associates with NifD.

Its function is as follows. May protect the nitrogenase Fe-Mo protein from oxidative damage. The polypeptide is Nitrogenase-stabilizing/protective protein NifW (Paraburkholderia xenovorans (strain LB400)).